The following is a 406-amino-acid chain: ESX-5 secretion system protein EccE5 (406 aa).

Transmembrane regions (helical) follow at residues 9–29 (LALS…ILAV) and 43–63 (VAWW…VVSY).

Belongs to the EccE family. Part of the ESX-5 / type VII secretion system (T7SS), which is composed of cytosolic and membrane components. The ESX-5 membrane complex is composed of EccB5, EccC5, EccD5 and EccE5.

Its subcellular location is the cell inner membrane. Its function is as follows. Part of the ESX-5 specialized secretion system, which is responsible for the secretion of EsxN and a number of PE_PGRS and PPE proteins, including PPE41. The sequence is that of ESX-5 secretion system protein EccE5 from Mycobacterium tuberculosis (strain ATCC 25618 / H37Rv).